We begin with the raw amino-acid sequence, 459 residues long: Fibrinogen C domain-containing protein 1 (459 aa).

The interval Met1–Lys22 is disordered. The Cytoplasmic portion of the chain corresponds to Met1 to Cys33. Residues Thr34–Leu54 form a helical; Signal-anchor for type II membrane protein membrane-spanning segment. Over Asn55–Arg459 the chain is Extracellular. The Fibrinogen C-terminal domain maps to Cys233–Arg456. An intrachain disulfide couples Cys242 to Cys271. An N-linked (GlcNAc...) asparagine glycan is attached at Asn338. 2 residues coordinate Ca(2+): Asp391 and Asp393. A disulfide bond links Cys399 and Cys412.

As to quaternary structure, homotetramer; disulfide-linked.

The protein localises to the membrane. Acetyl group-binding receptor which shows a high-affinity and calcium-dependent binding to acetylated structures such as chitin, some N-acetylated carbohydrates, and amino acids, but not to their non-acetylated counterparts. Can facilitate the endocytosis of acetylated components. This chain is Fibrinogen C domain-containing protein 1 (Fibcd1), found in Mus musculus (Mouse).